A 215-amino-acid polypeptide reads, in one-letter code: Large ribosomal subunit protein uL3 (215 aa).

Q156 is subject to N5-methylglutamine.

It belongs to the universal ribosomal protein uL3 family. Part of the 50S ribosomal subunit. Forms a cluster with proteins L14 and L19. In terms of processing, methylated by PrmB.

Its function is as follows. One of the primary rRNA binding proteins, it binds directly near the 3'-end of the 23S rRNA, where it nucleates assembly of the 50S subunit. The chain is Large ribosomal subunit protein uL3 from Xylella fastidiosa (strain M12).